A 490-amino-acid polypeptide reads, in one-letter code: Betaine aldehyde dehydrogenase (490 aa).

Positions 26, 27, and 93 each coordinate K(+). 150 to 152 provides a ligand contact to NAD(+); that stretch reads GAW. Residue Lys162 is the Charge relay system of the active site. Residue 176–179 participates in NAD(+) binding; that stretch reads KPSE. Residue Val180 participates in K(+) binding. Residue 230–233 coordinates NAD(+); the sequence is GTVT. Leu246 contributes to the K(+) binding site. Glu252 acts as the Proton acceptor in catalysis. Positions 254, 286, and 387 each coordinate NAD(+). Cys286 acts as the Nucleophile in catalysis. Position 286 is a cysteine sulfenic acid (-SOH) (Cys286). K(+) contacts are provided by Lys457 and Gly460. Catalysis depends on Glu464, which acts as the Charge relay system.

It belongs to the aldehyde dehydrogenase family. As to quaternary structure, dimer of dimers. K(+) is required as a cofactor.

The enzyme catalyses betaine aldehyde + NAD(+) + H2O = glycine betaine + NADH + 2 H(+). It functions in the pathway amine and polyamine biosynthesis; betaine biosynthesis via choline pathway; betaine from betaine aldehyde: step 1/1. In terms of biological role, involved in the biosynthesis of the osmoprotectant glycine betaine. Catalyzes the irreversible oxidation of betaine aldehyde to the corresponding acid. This chain is Betaine aldehyde dehydrogenase, found in Ectopseudomonas mendocina (strain ymp) (Pseudomonas mendocina).